Reading from the N-terminus, the 128-residue chain is Small ribosomal subunit protein uS11 (128 aa).

This sequence belongs to the universal ribosomal protein uS11 family. In terms of assembly, part of the 30S ribosomal subunit. Interacts with proteins S7 and S18. Binds to IF-3.

Its function is as follows. Located on the platform of the 30S subunit, it bridges several disparate RNA helices of the 16S rRNA. Forms part of the Shine-Dalgarno cleft in the 70S ribosome. The polypeptide is Small ribosomal subunit protein uS11 (Chromohalobacter salexigens (strain ATCC BAA-138 / DSM 3043 / CIP 106854 / NCIMB 13768 / 1H11)).